We begin with the raw amino-acid sequence, 751 residues long: Photosystem I P700 chlorophyll a apoprotein A1 (751 aa).

Transmembrane regions (helical) follow at residues valine 71 to alanine 94, leucine 157 to histidine 180, leucine 196 to leucine 220, isoleucine 292 to tyrosine 310, tryptophan 347 to tyrosine 370, leucine 386 to valine 412, alanine 434 to histidine 456, and phenylalanine 532 to leucine 550. [4Fe-4S] cluster contacts are provided by cysteine 574 and cysteine 583. The next 2 membrane-spanning stretches (helical) occupy residues histidine 590–tryptophan 611 and leucine 665–phenylalanine 687. Residue histidine 676 participates in chlorophyll a' binding. Chlorophyll a is bound by residues methionine 684 and tyrosine 692. Tryptophan 693 serves as a coordination point for phylloquinone. A helical membrane pass occupies residues alanine 725–alanine 745.

The protein belongs to the PsaA/PsaB family. In terms of assembly, the PsaA/B heterodimer binds the P700 chlorophyll special pair and subsequent electron acceptors. PSI consists of a core antenna complex that captures photons, and an electron transfer chain that converts photonic excitation into a charge separation. The eukaryotic PSI reaction center is composed of at least 11 subunits. Requires P700 is a chlorophyll a/chlorophyll a' dimer, A0 is one or more chlorophyll a, A1 is one or both phylloquinones and FX is a shared 4Fe-4S iron-sulfur center. as cofactor.

Its subcellular location is the plastid. It is found in the chloroplast thylakoid membrane. It carries out the reaction reduced [plastocyanin] + hnu + oxidized [2Fe-2S]-[ferredoxin] = oxidized [plastocyanin] + reduced [2Fe-2S]-[ferredoxin]. PsaA and PsaB bind P700, the primary electron donor of photosystem I (PSI), as well as the electron acceptors A0, A1 and FX. PSI is a plastocyanin-ferredoxin oxidoreductase, converting photonic excitation into a charge separation, which transfers an electron from the donor P700 chlorophyll pair to the spectroscopically characterized acceptors A0, A1, FX, FA and FB in turn. Oxidized P700 is reduced on the lumenal side of the thylakoid membrane by plastocyanin. The chain is Photosystem I P700 chlorophyll a apoprotein A1 from Zea mays (Maize).